The sequence spans 202 residues: Putative zinc finger protein ZK686.5 (202 aa).

Residues 43-63 are disordered; that stretch reads RKNVDNTSTRKPYSYKDRKRK. 3 consecutive C2H2-type zinc fingers follow at residues 110–133, 138–160, and 169–192; these read TYCELCEQNFSSSKMLLLHRGKVH, IECHLCMKLFSQTIQFNRHMKTH, and VQCELCDRQFKDKQSLRTHWDVSH.

Its subcellular location is the nucleus. This Caenorhabditis elegans protein is Putative zinc finger protein ZK686.5.